The primary structure comprises 457 residues: Argininosuccinate lyase (457 aa).

Belongs to the lyase 1 family. Argininosuccinate lyase subfamily.

Its subcellular location is the cytoplasm. The catalysed reaction is 2-(N(omega)-L-arginino)succinate = fumarate + L-arginine. It functions in the pathway amino-acid biosynthesis; L-arginine biosynthesis; L-arginine from L-ornithine and carbamoyl phosphate: step 3/3. This Escherichia coli O127:H6 (strain E2348/69 / EPEC) protein is Argininosuccinate lyase.